The chain runs to 357 residues: UDP-N-acetylglucosamine--N-acetylmuramyl-(pentapeptide) pyrophosphoryl-undecaprenol N-acetylglucosamine transferase (357 aa).

Residues 14–16, N126, R162, S190, I246, 265–270, and Q290 each bind UDP-N-acetyl-alpha-D-glucosamine; these read TGG and ALTVCE.

The protein belongs to the glycosyltransferase 28 family. MurG subfamily.

The protein localises to the cell inner membrane. It catalyses the reaction di-trans,octa-cis-undecaprenyl diphospho-N-acetyl-alpha-D-muramoyl-L-alanyl-D-glutamyl-meso-2,6-diaminopimeloyl-D-alanyl-D-alanine + UDP-N-acetyl-alpha-D-glucosamine = di-trans,octa-cis-undecaprenyl diphospho-[N-acetyl-alpha-D-glucosaminyl-(1-&gt;4)]-N-acetyl-alpha-D-muramoyl-L-alanyl-D-glutamyl-meso-2,6-diaminopimeloyl-D-alanyl-D-alanine + UDP + H(+). It participates in cell wall biogenesis; peptidoglycan biosynthesis. In terms of biological role, cell wall formation. Catalyzes the transfer of a GlcNAc subunit on undecaprenyl-pyrophosphoryl-MurNAc-pentapeptide (lipid intermediate I) to form undecaprenyl-pyrophosphoryl-MurNAc-(pentapeptide)GlcNAc (lipid intermediate II). In Histophilus somni (strain 129Pt) (Haemophilus somnus), this protein is UDP-N-acetylglucosamine--N-acetylmuramyl-(pentapeptide) pyrophosphoryl-undecaprenol N-acetylglucosamine transferase.